Reading from the N-terminus, the 474-residue chain is ABHD16B (474 aa).

An AB hydrolase-1 domain is found at 175–295 (VICCEGNAGF…QSWKGLVVRT (121 aa)). Residues S248, D323, and H423 each act as charge relay system in the active site.

It belongs to the AB hydrolase superfamily. ABHD16 family. Expressed in most tissues, with highest expression found in the testes, skeletal muscle, and brown adipose tissue.

It carries out the reaction a 1,2-diacyl-sn-glycero-3-phospho-L-serine + H2O = a 2-acyl-sn-glycero-3-phospho-L-serine + a fatty acid + H(+). The catalysed reaction is a 1-acylglycerol + H2O = glycerol + a fatty acid + H(+). It catalyses the reaction 1-(9Z-octadecenoyl)-glycerol + H2O = glycerol + (9Z)-octadecenoate + H(+). In terms of biological role, hydrolyzes the sn-1 position of glycerophospholipids with high specificity towards phosphatidylserine (PS), PS-PLA1 enzyme. Also hydrolyzes the acyl chain of glycerolipids with a preference for the monoacylglycerol (MAG) 1-acylglycerol, MAG lipase. Plays a regulatory role in cellular lipid homeostasis by modulating genes involved in neutral lipid degradation and in phospholipid synthesis and composition. This is ABHD16B from Mus musculus (Mouse).